Reading from the N-terminus, the 491-residue chain is Synaptotagmin-9 (491 aa).

At 1–52 the chain is on the vesicular side; that stretch reads MPGARDALCHQALQLLAELCARGALEHDSCQDFIYHLRDRARPRLRDPDISV. Residues 9-31 are cysteine motif; the sequence is CHQALQLLAELCARGALEHDSCQ. Residues 53-73 traverse the membrane as a helical segment; it reads SLLTLVVTACGLALFGVSLFV. At 74–491 the chain is on the cytoplasmic side; it reads SWKLCWVPWR…AHWHSLLEKR (418 aa). The span at 91–104 shows a compositional bias: polar residues; that stretch reads SKDNNQEPLNYTDT. The disordered stretch occupies residues 91–147; it reads SKDNNQEPLNYTDTETNEQENSEDFLDPPTPCPDSSMKISHTSPDIPLSTQPGGQDN. Residues 105–116 show a composition bias toward acidic residues; that stretch reads ETNEQENSEDFL. Polar residues predominate over residues 127–144; sequence MKISHTSPDIPLSTQPGG. Ser177 bears the Phosphoserine mark. C2 domains lie at 220–341 and 352–485; these read ACGK…ILWK and DLGE…AHWH. 11 residues coordinate Ca(2+): Asp251, Asp257, Asp309, Phe310, Asp311, Ser314, Asp317, Asp383, Asp389, Asp443, and Asp445.

It belongs to the synaptotagmin family. Homodimer; disulfide-linked via the cysteine motif. Can also form heterodimers with SYT3, SYT6, SYT7 and SYT10. Ca(2+) is required as a cofactor.

It is found in the cytoplasmic vesicle. It localises to the secretory vesicle. The protein localises to the synaptic vesicle membrane. In terms of biological role, may be involved in Ca(2+)-dependent exocytosis of secretory vesicles through Ca(2+) and phospholipid binding to the C2 domain or may serve as Ca(2+) sensors in the process of vesicular trafficking and exocytosis. The chain is Synaptotagmin-9 (Syt9) from Rattus norvegicus (Rat).